The chain runs to 514 residues: 2-isopropylmalate synthase (514 aa).

Positions 5–268 (LIIFDTTLRD…DVGIDTTQIV (264 aa)) constitute a Pyruvate carboxyltransferase domain. D14, H202, H204, and N239 together coordinate Mn(2+). The interval 395 to 514 (KFVSLSQHSE…KDDKLNPQRS (120 aa)) is regulatory domain.

The protein belongs to the alpha-IPM synthase/homocitrate synthase family. LeuA type 1 subfamily. As to quaternary structure, homodimer. The cofactor is Mn(2+).

Its subcellular location is the cytoplasm. The enzyme catalyses 3-methyl-2-oxobutanoate + acetyl-CoA + H2O = (2S)-2-isopropylmalate + CoA + H(+). It functions in the pathway amino-acid biosynthesis; L-leucine biosynthesis; L-leucine from 3-methyl-2-oxobutanoate: step 1/4. Functionally, catalyzes the condensation of the acetyl group of acetyl-CoA with 3-methyl-2-oxobutanoate (2-ketoisovalerate) to form 3-carboxy-3-hydroxy-4-methylpentanoate (2-isopropylmalate). The chain is 2-isopropylmalate synthase from Burkholderia multivorans (strain ATCC 17616 / 249).